The primary structure comprises 864 residues: Probable LRR receptor-like serine/threonine-protein kinase At1g07550 (864 aa).

Positions 1–23 are cleaved as a signal peptide; it reads MDTCTRLLFAACATLSILHLVQS. Residues 24 to 507 are Extracellular-facing; it reads QNQQGFISLD…SCGTRFPTAA (484 aa). Asn49, Asn229, Asn256, Asn289, Asn432, Asn445, and Asn464 each carry an N-linked (GlcNAc...) asparagine glycan. 3 LRR repeats span residues 411 to 434, 435 to 457, and 459 to 480; these read RIVK…QNLT, QLQE…LAKM, and YLLV…ALLD. A helical transmembrane segment spans residues 508-528; that stretch reads VAASVSAVAIIILVLVLIFVL. Topologically, residues 529-864 are cytoplasmic; it reads RRRKPSAGKV…VDTEINPKAR (336 aa). Thr551 carries the phosphothreonine modification. The Protein kinase domain maps to 560-831; it reads NNFQVVIGKG…QVVHVLNECL (272 aa). ATP-binding positions include 566-574 and Lys587; that span reads IGKGGFGVV. Tyr632 carries the post-translational modification Phosphotyrosine. The active-site Proton acceptor is Asp684. A phosphothreonine mark is found at Thr718 and Thr723. Tyr731 is modified (phosphotyrosine).

It belongs to the protein kinase superfamily. Ser/Thr protein kinase family.

The protein localises to the membrane. The enzyme catalyses L-seryl-[protein] + ATP = O-phospho-L-seryl-[protein] + ADP + H(+). The catalysed reaction is L-threonyl-[protein] + ATP = O-phospho-L-threonyl-[protein] + ADP + H(+). This is Probable LRR receptor-like serine/threonine-protein kinase At1g07550 from Arabidopsis thaliana (Mouse-ear cress).